We begin with the raw amino-acid sequence, 196 residues long: ATP-dependent Clp protease proteolytic subunit (196 aa).

Ser98 acts as the Nucleophile in catalysis. His123 is a catalytic residue.

This sequence belongs to the peptidase S14 family. As to quaternary structure, fourteen ClpP subunits assemble into 2 heptameric rings which stack back to back to give a disk-like structure with a central cavity, resembling the structure of eukaryotic proteasomes.

It localises to the cytoplasm. The catalysed reaction is Hydrolysis of proteins to small peptides in the presence of ATP and magnesium. alpha-casein is the usual test substrate. In the absence of ATP, only oligopeptides shorter than five residues are hydrolyzed (such as succinyl-Leu-Tyr-|-NHMec, and Leu-Tyr-Leu-|-Tyr-Trp, in which cleavage of the -Tyr-|-Leu- and -Tyr-|-Trp bonds also occurs).. Functionally, cleaves peptides in various proteins in a process that requires ATP hydrolysis. Has a chymotrypsin-like activity. Plays a major role in the degradation of misfolded proteins. This is ATP-dependent Clp protease proteolytic subunit from Geobacillus sp. (strain WCH70).